We begin with the raw amino-acid sequence, 204 residues long: Nucleoside triphosphate pyrophosphatase (204 aa).

Catalysis depends on D78, which acts as the Proton acceptor.

This sequence belongs to the Maf family. Requires a divalent metal cation as cofactor.

The protein localises to the cytoplasm. It carries out the reaction a ribonucleoside 5'-triphosphate + H2O = a ribonucleoside 5'-phosphate + diphosphate + H(+). It catalyses the reaction a 2'-deoxyribonucleoside 5'-triphosphate + H2O = a 2'-deoxyribonucleoside 5'-phosphate + diphosphate + H(+). Nucleoside triphosphate pyrophosphatase. May have a dual role in cell division arrest and in preventing the incorporation of modified nucleotides into cellular nucleic acids. The protein is Nucleoside triphosphate pyrophosphatase of Prochlorococcus marinus (strain MIT 9215).